Reading from the N-terminus, the 76-residue chain is Omega/kappa-hexatoxin-Ar1g (76 aa).

The first 22 residues, M1–A22, serve as a signal peptide directing secretion. The propeptide occupies G23–V35. 3 cysteine pairs are disulfide-bonded: C40–C55, C47–C60, and C54–C74.

Belongs to the neurotoxin 08 (Shiva) family. 02 (omega/kappa toxin) subfamily. As to expression, expressed by the venom gland.

The protein localises to the secreted. Its function is as follows. Toxin that may inhibit ion channels. The protein is Omega/kappa-hexatoxin-Ar1g of Atrax robustus (Sydney funnel-web spider).